A 774-amino-acid polypeptide reads, in one-letter code: Transforming acidic coiled-coil-containing protein 1 (774 aa).

Position 2 is an N-acetylalanine (Ala-2). The tract at residues 2 to 56 (AFSPWQILSPVQWAKWTWSAVRGSGAGEDEAGGPEGDPEEEEDSQAETKSLSFSS) is interaction with LSM7 and SNRPG. Phosphoserine is present on residues Ser-4, Ser-10, and Ser-45. Positions 21–142 (AVRGSGAGED…VKDVRGKAEH (122 aa)) are disordered. Positions 28 to 46 (GEDEAGGPEGDPEEEEDSQ) are enriched in acidic residues. Positions 48–61 (ETKSLSFSSDSEGN) are enriched in polar residues. Residues 88–99 (PEAKPQESREAD) are compositionally biased toward basic and acidic residues. The segment covering 113–128 (DTCSRSSENEAPQATV) has biased composition (polar residues). Residues 131-142 (HPVKDVRGKAEH) are compositionally biased toward basic and acidic residues. Phosphoserine occurs at positions 148 and 154. The interval 153 to 255 (FSIETRNCTD…PEMLMEGSPL (103 aa)) is interaction with TDRD7. The tract at residues 207–424 (EAFTEASLKT…NNINTDDSGD (218 aa)) is interaction with YEATS4. Residues 214–428 (LKTGGPCPEP…TDDSGDPCKP (215 aa)) are disordered. SPAZ domains lie at 216-294 (TGGP…TAGV) and 354-504 (SKPV…TDEE). Residue Ser-228 is modified to Phosphoserine; by AURKC. The span at 228–241 (SKLRKPKPVSLRKK) shows a compositional bias: basic residues. Ser-376 and Ser-401 each carry phosphoserine. Over residues 397-407 (ILQNSPPLSSK) the composition is skewed to polar residues. The short motif at 452–468 (PKKAKSRLITSGCKVKK) is the Bipartite nuclear localization signal element. Phosphoserine is present on residues Ser-480 and Ser-560. A coiled-coil region spans residues 579-774 (IREEIITKEI…ELIAKLGKTD (196 aa)). An interaction with CH-TOG region spans residues 670–774 (VLEGFKKNEE…ELIAKLGKTD (105 aa)).

The protein belongs to the TACC family. Interacts with CH-TOG and YEATS4. Interacts with the AURKA and AURKB and AURKC. Interacts with LSM7, TDRD7 and SNRPG. Interacts with GCN5L2 and PCAF. Interacts with the thyroid hormone receptors THRB and THRA, predominantly with isoform alpha-2. The interaction with THRA isoform alpha-1 and THRB is decreased in the presence of thyroid hormone T3. Interacts with RARA in the nucleus. Also interacts with other nuclear receptors, including ESR1, NR3C1, PPARG and RXRA, preferentially in the absence of their hormonal ligands.

It is found in the cytoplasm. It localises to the nucleus. The protein resides in the cytoskeleton. Its subcellular location is the microtubule organizing center. The protein localises to the centrosome. It is found in the midbody. Its function is as follows. Involved in transcription regulation induced by nuclear receptors, including in T3 thyroid hormone and all-trans retinoic acid pathways. Might promote the nuclear localization of the receptors. Likely involved in the processes that promote cell division prior to the formation of differentiated tissues. This Mus musculus (Mouse) protein is Transforming acidic coiled-coil-containing protein 1 (Tacc1).